Reading from the N-terminus, the 431-residue chain is Glutamyl-tRNA(Gln) amidotransferase subunit A (431 aa).

Active-site charge relay system residues include Lys37 and Ser112. The active-site Acyl-ester intermediate is Ser136.

This sequence belongs to the amidase family. GatA subfamily. In terms of assembly, heterotrimer of A, B and C subunits.

It catalyses the reaction L-glutamyl-tRNA(Gln) + L-glutamine + ATP + H2O = L-glutaminyl-tRNA(Gln) + L-glutamate + ADP + phosphate + H(+). Allows the formation of correctly charged Gln-tRNA(Gln) through the transamidation of misacylated Glu-tRNA(Gln) in organisms which lack glutaminyl-tRNA synthetase. The reaction takes place in the presence of glutamine and ATP through an activated gamma-phospho-Glu-tRNA(Gln). In Methanospirillum hungatei JF-1 (strain ATCC 27890 / DSM 864 / NBRC 100397 / JF-1), this protein is Glutamyl-tRNA(Gln) amidotransferase subunit A.